The primary structure comprises 509 residues: Maturase K (509 aa).

Belongs to the intron maturase 2 family. MatK subfamily.

It is found in the plastid. It localises to the chloroplast. Usually encoded in the trnK tRNA gene intron. Probably assists in splicing its own and other chloroplast group II introns. The polypeptide is Maturase K (Avicennia marina (Grey mangrove)).